We begin with the raw amino-acid sequence, 324 residues long: Glutathione synthetase (324 aa).

In terms of domain architecture, ATP-grasp spans 133 to 317; it reads KMYALQFTKA…LAHQVIQWVE (185 aa). 159–215 is a binding site for ATP; that stretch reads VEAKGATVLKPLGNKAGEGILFLQAGDRNFNSIVELSTQQGRLPVMVQTYLPEAKEG. Mg(2+) is bound by residues Glu288 and Asn290.

It belongs to the prokaryotic GSH synthase family. Mg(2+) is required as a cofactor. Mn(2+) serves as cofactor.

The enzyme catalyses gamma-L-glutamyl-L-cysteine + glycine + ATP = glutathione + ADP + phosphate + H(+). It participates in sulfur metabolism; glutathione biosynthesis; glutathione from L-cysteine and L-glutamate: step 2/2. The chain is Glutathione synthetase from Nostoc sp. (strain PCC 7120 / SAG 25.82 / UTEX 2576).